Here is a 311-residue protein sequence, read N- to C-terminus: Heme A synthase (311 aa).

At 1 to 6 (MQRFIK) the chain is on the cytoplasmic side. A helical transmembrane segment spans residues 7–27 (WLAVITSLDLLVVLLGGALVT). Topologically, residues 28 to 62 (KTGSGQGCGKSWPLCNGEFVPSNLSMETIIELSHR) are extracellular. Cys-35 and Cys-42 form a disulfide bridge. Residue Glu-58 is part of the active site. His-61 provides a ligand contact to heme o. Residues 63–83 (LTSGSAGILVTLLCILSWKYY) traverse the membrane as a helical segment. Residues 84-91 (KHVRETKT) are Cytoplasmic-facing. A helical membrane pass occupies residues 92–112 (LAILSFVFLVAQALMGAAAVV). Residues 113–121 (WGQMPAVLA) are Extracellular-facing. Residues 122 to 142 (IHFGISLISFASVILLTCLIF) traverse the membrane as a helical segment. His-123 serves as a coordination point for heme o. Over 143-159 (EIDQKFDARSLIMDKKM) the chain is Cytoplasmic. A helical transmembrane segment spans residues 160–180 (KFHIYGVTIYSYIVVYTGALV). The Extracellular segment spans residues 181–211 (RHERATLACPDFPLCSKSRPMPTQLHEWVQM). A disulfide bond links Cys-189 and Cys-195. Residues 212–232 (GHRVAAMLIFAWILYAMIIAI) traverse the membrane as a helical segment. His-213 lines the heme b pocket. At 233 to 243 (RHYKQQRVVYW) the chain is on the cytoplasmic side. A helical membrane pass occupies residues 244–264 (GWIISFILVTLQAIVGILVVF). Residues 265-271 (TNASLAM) are Extracellular-facing. The helical transmembrane segment at 272–292 (ALLHSLFISCLFAVLCYLVMI) threads the bilayer. His-275 lines the heme b pocket. Topologically, residues 293–311 (GTRSTVNAKETESTSKQTK) are cytoplasmic.

Belongs to the COX15/CtaA family. Type 1 subfamily. As to quaternary structure, interacts with CtaB. Requires heme b as cofactor.

It localises to the cell membrane. It catalyses the reaction Fe(II)-heme o + 2 A + H2O = Fe(II)-heme a + 2 AH2. Its pathway is porphyrin-containing compound metabolism; heme A biosynthesis; heme A from heme O: step 1/1. In terms of biological role, catalyzes the conversion of heme O to heme A by two successive hydroxylations of the methyl group at C8. The first hydroxylation forms heme I, the second hydroxylation results in an unstable dihydroxymethyl group, which spontaneously dehydrates, resulting in the formyl group of heme A. This Bacillus mycoides (strain KBAB4) (Bacillus weihenstephanensis) protein is Heme A synthase.